Consider the following 710-residue polypeptide: Early transcription factor 82 kDa subunit (710 aa).

It belongs to the poxviridae VETF large subunit family. In terms of assembly, heterodimer of a 70 kDa and a 82 kDa subunit. Part of the early transcription complex composed of ETF, RAP94/OPG109, and the DNA-directed RNA polymerase.

It localises to the virion. In terms of biological role, acts with RNA polymerase to initiate transcription from early gene promoters. Is recruited by the RPO-associated protein of 94 kDa RAP94/OPG109 to form the early transcription complex, which also contains the core RNA polymerase. ETF heterodimer binds to early gene promoters. This is Early transcription factor 82 kDa subunit (OPG133) from Vaccinia virus (strain Ankara) (VACV).